The primary structure comprises 852 residues: Protein SEY1 (852 aa).

At 1–738 (MNGHFAAIGN…KRSAIGGITQ (738 aa)) the chain is on the cytoplasmic side. Residues 47–294 (GFNYHLISVF…IPADGLSVYA (248 aa)) enclose the GB1/RHD3-type G domain. 57 to 64 (GSQSTGKS) serves as a coordination point for GTP. The stretch at 475 to 500 (QYKLFEKELDEVSARLRKEEMRRLAI) forms a coiled coil. A helical membrane pass occupies residues 739–759 (VPLYFYVILLILGWNEILMVL). Residues 760–762 (RNP) are Lumenal-facing. A helical transmembrane segment spans residues 763–783 (FLILLILVMGGGTYIAYSLNL). The Cytoplasmic segment spans residues 784–852 (LGPMMQMSNA…AQDISDDDDI (69 aa)).

The protein belongs to the TRAFAC class dynamin-like GTPase superfamily. GB1/RHD3 GTPase family. RHD3 subfamily.

It is found in the endoplasmic reticulum membrane. In terms of biological role, cooperates with the reticulon proteins and tubule-shaping DP1 family proteins to generate and maintain the structure of the tubular endoplasmic reticulum network. Has GTPase activity, which is required for its function in ER organization. In Podospora anserina (strain S / ATCC MYA-4624 / DSM 980 / FGSC 10383) (Pleurage anserina), this protein is Protein SEY1.